The primary structure comprises 88 residues: MKLTLIILLVVAYSWCSEAQNEARVFCGRVLSERLAALCWGPNSVKRDAGWWLTRGAARSLGGVRGKRGLATECCDKACTVEELLSYC.

The signal sequence occupies residues 1–19; the sequence is MKLTLIILLVVAYSWCSEA. Residues 20 to 45 constitute a propeptide that is removed on maturation; the sequence is QNEARVFCGRVLSERLAALCWGPNSV. Arginine 65 carries the post-translational modification Arginine amide. The propeptide occupies 69–88; sequence GLATECCDKACTVEELLSYC.

This sequence belongs to the insulin family. In terms of tissue distribution, DAGWWLTRGAARSLGGVR-amide: Expressed in corpora cardiaca (CC), corpora allata (CA), antennal lobe (AL) and gnathal ganglion (GNG) (at protein level). Expression in CC and CA detected in most animals, in AL and GNG in few animals (at protein level).

The protein resides in the secreted. The chain is Insulin-related peptide 4 from Agrotis ipsilon (Black cutworm moth).